A 189-amino-acid chain; its full sequence is Potassium-transporting ATPase KdpC subunit (189 aa).

Residues 6-26 form a helical membrane-spanning segment; sequence PAILMLIIFTILCGGIYPAVV.

Belongs to the KdpC family. As to quaternary structure, the system is composed of three essential subunits: KdpA, KdpB and KdpC.

The protein resides in the cell inner membrane. Its function is as follows. Part of the high-affinity ATP-driven potassium transport (or Kdp) system, which catalyzes the hydrolysis of ATP coupled with the electrogenic transport of potassium into the cytoplasm. This subunit acts as a catalytic chaperone that increases the ATP-binding affinity of the ATP-hydrolyzing subunit KdpB by the formation of a transient KdpB/KdpC/ATP ternary complex. In Geobacter sulfurreducens (strain ATCC 51573 / DSM 12127 / PCA), this protein is Potassium-transporting ATPase KdpC subunit.